Consider the following 145-residue polypeptide: Antiholin-like protein LrgA (145 aa).

A run of 4 helical transmembrane segments spans residues 10 to 30 (PAHF…SKII), 33 to 53 (FMPI…VLLC), 72 to 92 (NIGL…GVIS), and 96 to 116 (FLII…TGYV).

The protein belongs to the CidA/LrgA family. LrgA subfamily.

The protein resides in the cell membrane. Functionally, inhibits the expression or activity of extracellular murein hydrolases by interacting, possibly with LrgB, with the holin-like proteins CidA and/or CidB. The LrgAB and CidAB proteins may affect the proton motive force of the membrane. May be involved in programmed cell death (PCD), possibly triggering PCD in response to antibiotics and environmental stresses. In Staphylococcus aureus (strain Mu3 / ATCC 700698), this protein is Antiholin-like protein LrgA.